The primary structure comprises 224 residues: Cytidylate kinase (224 aa).

ATP is bound at residue 10-18 (GPASAGKST).

Belongs to the cytidylate kinase family. Type 1 subfamily.

The protein resides in the cytoplasm. It carries out the reaction CMP + ATP = CDP + ADP. The enzyme catalyses dCMP + ATP = dCDP + ADP. This Leuconostoc mesenteroides subsp. mesenteroides (strain ATCC 8293 / DSM 20343 / BCRC 11652 / CCM 1803 / JCM 6124 / NCDO 523 / NBRC 100496 / NCIMB 8023 / NCTC 12954 / NRRL B-1118 / 37Y) protein is Cytidylate kinase.